A 244-amino-acid chain; its full sequence is Ubiquinone biosynthesis O-methyltransferase (244 aa).

S-adenosyl-L-methionine is bound by residues Arg-36, Gly-60, Asp-81, and Leu-123.

This sequence belongs to the methyltransferase superfamily. UbiG/COQ3 family.

It catalyses the reaction a 3-demethylubiquinol + S-adenosyl-L-methionine = a ubiquinol + S-adenosyl-L-homocysteine + H(+). The catalysed reaction is a 3-(all-trans-polyprenyl)benzene-1,2-diol + S-adenosyl-L-methionine = a 2-methoxy-6-(all-trans-polyprenyl)phenol + S-adenosyl-L-homocysteine + H(+). Its pathway is cofactor biosynthesis; ubiquinone biosynthesis. In terms of biological role, O-methyltransferase that catalyzes the 2 O-methylation steps in the ubiquinone biosynthetic pathway. The protein is Ubiquinone biosynthesis O-methyltransferase of Rickettsia felis (strain ATCC VR-1525 / URRWXCal2) (Rickettsia azadi).